The following is a 163-amino-acid chain: NADH-quinone oxidoreductase subunit I (163 aa).

4Fe-4S ferredoxin-type domains follow at residues Arg-55–Glu-84 and Thr-94–Asn-123. Residues Cys-64, Cys-67, Cys-70, Cys-74, Cys-103, Cys-106, Cys-109, and Cys-113 each coordinate [4Fe-4S] cluster.

Belongs to the complex I 23 kDa subunit family. NDH-1 is composed of 14 different subunits. Subunits NuoA, H, J, K, L, M, N constitute the membrane sector of the complex. [4Fe-4S] cluster is required as a cofactor.

It localises to the cell inner membrane. It catalyses the reaction a quinone + NADH + 5 H(+)(in) = a quinol + NAD(+) + 4 H(+)(out). Its function is as follows. NDH-1 shuttles electrons from NADH, via FMN and iron-sulfur (Fe-S) centers, to quinones in the respiratory chain. The immediate electron acceptor for the enzyme in this species is believed to be ubiquinone. Couples the redox reaction to proton translocation (for every two electrons transferred, four hydrogen ions are translocated across the cytoplasmic membrane), and thus conserves the redox energy in a proton gradient. This chain is NADH-quinone oxidoreductase subunit I, found in Caulobacter vibrioides (strain ATCC 19089 / CIP 103742 / CB 15) (Caulobacter crescentus).